Reading from the N-terminus, the 274-residue chain is Type III pantothenate kinase (274 aa).

6–13 lines the ATP pocket; sequence DVRNTHTV. 109–112 contacts substrate; that stretch reads GADR. Asp111 functions as the Proton acceptor in the catalytic mechanism. Asp131 serves as a coordination point for K(+). Residue Ser134 participates in ATP binding. Thr186 contacts substrate.

The protein belongs to the type III pantothenate kinase family. In terms of assembly, homodimer. The cofactor is NH4(+). It depends on K(+) as a cofactor.

Its subcellular location is the cytoplasm. It carries out the reaction (R)-pantothenate + ATP = (R)-4'-phosphopantothenate + ADP + H(+). It participates in cofactor biosynthesis; coenzyme A biosynthesis; CoA from (R)-pantothenate: step 1/5. In terms of biological role, catalyzes the phosphorylation of pantothenate (Pan), the first step in CoA biosynthesis. The chain is Type III pantothenate kinase from Mycobacterium leprae (strain Br4923).